The chain runs to 602 residues: Cytoskeleton-associated protein 4 (602 aa).

The disordered stretch occupies residues 1 to 83 (MPSAKQRGSK…GGGGKSSSSS (83 aa)). Residues 1-106 (MPSAKQRGSK…SASCSRRLGR (106 aa)) are Cytoplasmic-facing. Serine 3, serine 17, and serine 19 each carry phosphoserine. Residue lysine 21 is modified to N6-acetyllysine. Residues 35–52 (KPPPAPQQPPPPPAPHPQ) are compositionally biased toward pro residues. A compositionally biased stretch (low complexity) spans 53 to 64 (QHPQQHPQNQAH). A lipid anchor (S-palmitoyl cysteine; by ZDHHC2) is attached at cysteine 100. Residues 107 to 127 (ALNFLFYLALVAAAAFSGWCV) traverse the membrane as a helical segment. Topologically, residues 128–602 (HHVLEEVQQV…VKVEKIHEKV (475 aa)) are extracellular. Residues 130-214 (VLEEVQQVRR…QKLQNEILKD (85 aa)) adopt a coiled-coil conformation. The residue at position 232 (serine 232) is a Phosphoserine; by FAM20C. Coiled-coil stretches lie at residues 256-460 (TEVQ…GLGS) and 533-602 (LSSL…HEKV). Phosphoserine is present on serine 312.

Interacts with REEP5. In terms of processing, reversibly palmitoylated. Palmitoylation at Cys-100 by ZDHHC2 is required for its trafficking from the ER to the plasma membrane and for its perinuclear localization. Palmitoylation by ZDHHC2 is also required for its function in APF-mediated antiproliferative signaling. Post-translationally, increased phosphorylation during mitosis prevents binding to microtubules.

The protein resides in the endoplasmic reticulum membrane. It is found in the cell membrane. It localises to the cytoplasm. Its subcellular location is the cytoskeleton. The protein localises to the perinuclear region. Functionally, mediates the anchoring of the endoplasmic reticulum to microtubules. In terms of biological role, high-affinity epithelial cell surface receptor for the FZD8-related low molecular weight sialoglycopeptide APF/antiproliferative factor. Mediates the APF antiproliferative signaling within cells. The polypeptide is Cytoskeleton-associated protein 4 (CKAP4) (Homo sapiens (Human)).